The primary structure comprises 454 residues: Alkaline extracellular protease (454 aa).

The N-terminal stretch at 1–15 (MKLATAFTILTAVLA) is a signal peptide. A propeptide spanning residues 16 to 157 (APLAAPAPAP…EIPASSNAKR (142 aa)) is cleaved from the precursor. The region spanning 68-146 (FIVVFDSSAT…TVEPDTIVSL (79 aa)) is the Inhibitor I9 domain. Asn-123 carries N-linked (GlcNAc...) asparagine glycosylation. The Peptidase S8 domain maps to 166-454 (QWGLSRISHK…NAVAYNGVGI (289 aa)). Active-site charge relay system residues include Asp-200, His-231, and Ser-397.

Belongs to the peptidase S8 family. In terms of processing, the pro-region is removed through cleavage by XPR6 after Lys156-Arg157, which yields mature active XPR2. Post-translationally, the 10 consecutive -X-Ala- or -X-Pro- dipeptides located over 100 amino acids upstream of the N-terminal of mature XPR2 are subject to dipeptidyl aminopeptidase (DPAPase)-processing. DPAPase activity is not necessary for XPR6 cleavage and for secretion of mature active XPR2. N-glycosylated. Glycosylation within the pro-region has no effect on secretion and maturation at 18 degrees Celsius, but is required for secretion at 28 degrees Celsius.

Its subcellular location is the secreted. It carries out the reaction Hydrolysis of proteins with broad specificity for peptide bonds, and a preference for a large uncharged residue in P1. Hydrolyzes peptide amides.. With respect to regulation, the protease activity is completely inhibited by the serine inhibitor PMSF but is not affected by thiol group inhibitors and in the presence of dithiothreitol. In the presence of high concentrations of o-phenanthroline the protease activity is only partially inhibited. The pro-region plays an inhibitory role and may provide a mechanism for preventing premature activation in the secretory pathway. Major secreted protein that belongs to the subtilisin family serine proteases. This is Alkaline extracellular protease from Yarrowia lipolytica (strain CLIB 122 / E 150) (Yeast).